Here is a 281-residue protein sequence, read N- to C-terminus: uncharacterized protein (281 aa).

Disordered stretches follow at residues 192–212 (SNSS…IQET) and 227–281 (EDYV…SEEY). Residues 200 to 211 (MDKKSDDSKIQE) show a composition bias toward basic and acidic residues. 2 stretches are compositionally biased toward acidic residues: residues 227–240 (EDYV…ISDN) and 249–260 (DTDSDLGDLEDP).

This sequence belongs to the cullin family.

This is an uncharacterized protein from Acanthamoeba polyphaga (Amoeba).